The following is a 158-amino-acid chain: Transcriptional repressor NrdR (158 aa).

The segment at 3–34 (CPSCQNTDSRVLESRAADAGRSVRRRRECLHC) is a zinc-finger region. The region spanning 49 to 139 (ITVLKRNGNR…VYRDFRGVND (91 aa)) is the ATP-cone domain.

It belongs to the NrdR family. Zn(2+) serves as cofactor.

In terms of biological role, negatively regulates transcription of bacterial ribonucleotide reductase nrd genes and operons by binding to NrdR-boxes. In Prochlorococcus marinus (strain MIT 9313), this protein is Transcriptional repressor NrdR.